Here is a 274-residue protein sequence, read N- to C-terminus: Aliphatic sulfonates import ATP-binding protein SsuB 2 (274 aa).

One can recognise an ABC transporter domain in the interval 21–235 (VQLRNVVRQF…DSGQAGFQLI (215 aa)). An ATP-binding site is contributed by 53–60 (GASGSGKT).

This sequence belongs to the ABC transporter superfamily. Aliphatic sulfonates importer (TC 3.A.1.17.2) family. As to quaternary structure, the complex is composed of two ATP-binding proteins (SsuB), two transmembrane proteins (SsuC) and a solute-binding protein (SsuA).

The protein resides in the cell inner membrane. It catalyses the reaction ATP + H2O + aliphatic sulfonate-[sulfonate-binding protein]Side 1 = ADP + phosphate + aliphatic sulfonateSide 2 + [sulfonate-binding protein]Side 1.. Part of the ABC transporter complex SsuABC involved in aliphatic sulfonates import. Responsible for energy coupling to the transport system. The sequence is that of Aliphatic sulfonates import ATP-binding protein SsuB 2 from Pseudomonas syringae pv. syringae (strain B728a).